Reading from the N-terminus, the 115-residue chain is Parathyroid hormone (115 aa).

The first 25 residues, 1–25 (MIPAKDMAKVMIVMLAICFLTKSDG), serve as a signal peptide directing secretion. Positions 26–31 (KSVKKR) are excised as a propeptide. Residues 51–69 (RVEWLRKKLQDVHNFVALG) form an important for receptor binding region. Positions 73–115 (APRDAGSQRPRKKEDNVLVESHEKSLGEADKADVNVLTKAKSQ) are disordered. Basic and acidic residues predominate over residues 84–105 (KKEDNVLVESHEKSLGEADKAD).

The protein belongs to the parathyroid hormone family. In terms of assembly, interacts with PTH1R (via N-terminal extracellular domain).

Its subcellular location is the secreted. In terms of biological role, parathyroid hormone elevates calcium level by dissolving the salts in bone and preventing their renal excretion. Acts by binding to its receptor, PTH1R, activating G protein-coupled receptor signaling. Stimulates [1-14C]-2-deoxy-D-glucose (2DG) transport and glycogen synthesis in osteoblastic cells. This chain is Parathyroid hormone, found in Homo sapiens (Human).